Reading from the N-terminus, the 89-residue chain is Small ribosomal subunit protein uS15 (89 aa).

The protein belongs to the universal ribosomal protein uS15 family. As to quaternary structure, part of the 30S ribosomal subunit. Forms a bridge to the 50S subunit in the 70S ribosome, contacting the 23S rRNA.

One of the primary rRNA binding proteins, it binds directly to 16S rRNA where it helps nucleate assembly of the platform of the 30S subunit by binding and bridging several RNA helices of the 16S rRNA. In terms of biological role, forms an intersubunit bridge (bridge B4) with the 23S rRNA of the 50S subunit in the ribosome. In Buchnera aphidicola subsp. Cinara cedri (strain Cc), this protein is Small ribosomal subunit protein uS15.